Here is a 343-residue protein sequence, read N- to C-terminus: Anthranilate 1,2-dioxygenase electron transfer component (343 aa).

The 94-residue stretch at 3 to 96 (HSVALNFADG…NAAFYFDHHS (94 aa)) folds into the 2Fe-2S ferredoxin-type domain. 4 residues coordinate [2Fe-2S] cluster: Cys40, Cys45, Cys48, and Cys80. Residues 98 to 338 (ICNAGETLKI…HIYSEKFLQS (241 aa)) are ferredoxin-reductase. Residues 103–206 (ETLKIATVVT…EAPLGSFYLR (104 aa)) enclose the FAD-binding FR-type domain.

It belongs to the bacterial ring-hydroxylating dioxygenase ferredoxin reductase family. Monomer. It is part of the anthranilate dioxygenase two component enzyme system. The other component is an oxygenase component consisting of 3 large (AntA) and 3 small (AntB) subunits. FAD is required as a cofactor. It depends on [2Fe-2S] cluster as a cofactor.

The catalysed reaction is 2 reduced [2Fe-2S]-[ferredoxin] + NAD(+) + H(+) = 2 oxidized [2Fe-2S]-[ferredoxin] + NADH. Its pathway is aromatic compound metabolism; anthranilate degradation via hydroxylation; catechol from anthranilate: step 1/1. Its function is as follows. Electron transfer component of anthranilate 1,2-dioxygenase system. The protein is Anthranilate 1,2-dioxygenase electron transfer component of Acinetobacter baylyi (strain ATCC 33305 / BD413 / ADP1).